Consider the following 82-residue polypeptide: Putative defensin-like protein 48 (82 aa).

The first 28 residues, 1–28 (MGIKTLIIFFHIFILAVLSSNNIILTSG), serve as a signal peptide directing secretion. 4 disulfide bridges follow: Cys39-Cys80, Cys43-Cys67, Cys53-Cys78, and Cys57-Cys79.

It belongs to the DEFL family.

The protein localises to the secreted. The chain is Putative defensin-like protein 48 from Arabidopsis thaliana (Mouse-ear cress).